The chain runs to 343 residues: 3-dehydroquinate synthase (343 aa).

Residues 61-66, 95-99, 119-120, Lys132, Lys141, and 159-162 contribute to the NAD(+) site; these read SGEKYK, GVISD, TT, and FLKT. 3 residues coordinate Zn(2+): Glu174, His231, and His248.

Belongs to the sugar phosphate cyclases superfamily. Dehydroquinate synthase family. Co(2+) serves as cofactor. Requires Zn(2+) as cofactor. It depends on NAD(+) as a cofactor.

The protein resides in the cytoplasm. The catalysed reaction is 7-phospho-2-dehydro-3-deoxy-D-arabino-heptonate = 3-dehydroquinate + phosphate. It functions in the pathway metabolic intermediate biosynthesis; chorismate biosynthesis; chorismate from D-erythrose 4-phosphate and phosphoenolpyruvate: step 2/7. Functionally, catalyzes the conversion of 3-deoxy-D-arabino-heptulosonate 7-phosphate (DAHP) to dehydroquinate (DHQ). This Helicobacter pylori (strain HPAG1) protein is 3-dehydroquinate synthase.